Consider the following 521-residue polypeptide: Type II methyltransferase M.AluI (521 aa).

In terms of domain architecture, SAM-dependent MTase C5-type spans 8–491 (YSFVDLFAGI…REHVRRDRAL (484 aa)). The active site involves Cys84.

It belongs to the class I-like SAM-binding methyltransferase superfamily. C5-methyltransferase family.

The catalysed reaction is a 2'-deoxycytidine in DNA + S-adenosyl-L-methionine = a 5-methyl-2'-deoxycytidine in DNA + S-adenosyl-L-homocysteine + H(+). A methylase, recognizes the double-stranded sequence 5'-AGCT-3', methylates C-3 on both strands, and protects the DNA from cleavage by the AluI endonuclease. The chain is Type II methyltransferase M.AluI from Cellulosimicrobium cellulans (Arthrobacter luteus).